Consider the following 418-residue polypeptide: uncharacterized protein (418 aa).

The next 10 helical transmembrane spans lie at 51 to 71 (FVMA…GALV), 79 to 99 (ALVV…PLFA), 110 to 130 (VTGI…LGAV), 163 to 183 (FFGP…SVLA), 224 to 244 (VIFG…LPLV), 258 to 278 (ALMS…AYVV), 289 to 309 (PIFL…TLSD), 315 to 335 (VGVQ…FPLV), 356 to 376 (ATGI…VVAG), and 379 to 399 (AAFM…LVAM).

This sequence belongs to the major facilitator superfamily.

The protein localises to the cell membrane. This is an uncharacterized protein from Mycobacterium tuberculosis (strain CDC 1551 / Oshkosh).